We begin with the raw amino-acid sequence, 596 residues long: Meiosis-specific protein ASY1 (596 aa).

In terms of domain architecture, HORMA spans 15-228 (QDSLLLTRNL…SKHLVLTLKV (214 aa)). Positions 235–303 (CEDENDDMQD…NTQDPAENEQ (69 aa)) are disordered. The segment covering 282-295 (QDDDDGEVDEDDNT) has biased composition (acidic residues). The SWIRM domain maps to 351-449 (SKTGKDMYIK…ASSNRRLGKR (99 aa)). The disordered stretch occupies residues 562-596 (TVNCSQASQDRRGRKTSMVREPILQYSKRQKSQAN).

Interacts with ASY3.

It localises to the chromosome. The protein resides in the nucleus. Functionally, required for normal meiosis in male and female gametophytes. Plays a crucial role in coordinating the activity of DMC1, a key member of the homologous recombination machinery. Acts at the interface between the developing chromosome axes and the recombination machinery to ensure DMC1-mediated interhomolog recombination. The polypeptide is Meiosis-specific protein ASY1 (Arabidopsis thaliana (Mouse-ear cress)).